Reading from the N-terminus, the 342-residue chain is Aquaporin-7 (342 aa).

The Cytoplasmic segment spans residues Met1–Glu36. At Ser20 the chain carries Phosphoserine. The chain crosses the membrane as a helical span at residues Phe37 to Ser54. Residues Val55 to Tyr67 lie on the Extracellular side of the membrane. The helical transmembrane segment at Leu68–Ala85 threads the bilayer. Residues Gly86–Ser89 are Cytoplasmic-facing. The discontinuously helical intramembrane region spans Gly90–Ala103. Residues Asn94–Ala96 carry the NPA 1 motif. Topologically, residues Leu104–Lys111 are cytoplasmic. The chain crosses the membrane as a helical span at residues Phe112 to Ser132. Residues Leu133–Arg170 are Extracellular-facing. Residues Gly171 to Ala188 form a helical membrane-spanning segment. At Ile189–Gly200 the chain is on the cytoplasmic side. The chain crosses the membrane as a helical span at residues Thr201 to Leu217. Over Gly218–Thr221 the chain is Extracellular. An intramembrane region (discontinuously helical) is located at residues Gly222–Ile235. The short motif at Asn226–Ser228 is the NPA 2 element. Topologically, residues Phe236–Trp253 are extracellular. Residues Trp254–Phe275 traverse the membrane as a helical segment. At Ile276–Phe342 the chain is on the cytoplasmic side.

This sequence belongs to the MIP/aquaporin (TC 1.A.8) family. Homotetramer; each monomer provides an independent glycerol/water pore. Two homotetramers on opposing membranes can dimerize, forming a cell-cell junction. Interacts with PLIN1. Phosphorylation by PKA could prevent the interaction with PLIN1. In terms of tissue distribution, detected in the sperm head (at protein level). Detected in white adipose tissue.

The protein resides in the cell membrane. The protein localises to the cytoplasmic vesicle membrane. Its subcellular location is the lipid droplet. It catalyses the reaction glycerol(in) = glycerol(out). It carries out the reaction H2O(in) = H2O(out). The catalysed reaction is urea(in) = urea(out). Its activity is regulated as follows. Glycerol transport is regulated by pH, with the porin being permeable to glycerol at pH 7.4 but not at pH 5.5. Water permeability, however, is not influenced by pH. Inhibited by mercury ions. In terms of biological role, aquaglyceroporins form homotetrameric transmembrane channels, with each monomer independently mediating glycerol and water transport across the plasma membrane along their osmotic gradient. Could also be permeable to urea. Mediates the efflux of glycerol, formed upon triglyceride hydrolysis, to avoid its accumulation in adipocytes and to make it available to other tissues. In the kidney, mediates the reabsorption of glycerol, preventing its loss in urine, again participating to energy homeostasis. In pancreatic beta cells, it also mediates the efflux of glycerol, regulating its intracellular levels. The sequence is that of Aquaporin-7 from Homo sapiens (Human).